We begin with the raw amino-acid sequence, 477 residues long: Glutamyl-tRNA reductase (477 aa).

Substrate-binding positions include 49–52 (TCNR), Ser109, 114–116 (EQQ), and Gln120. Cys50 serves as the catalytic Nucleophile. 189–194 (GAGAMG) contributes to the NADP(+) binding site.

The protein belongs to the glutamyl-tRNA reductase family. In terms of assembly, homodimer.

It catalyses the reaction (S)-4-amino-5-oxopentanoate + tRNA(Glu) + NADP(+) = L-glutamyl-tRNA(Glu) + NADPH + H(+). Its pathway is porphyrin-containing compound metabolism; protoporphyrin-IX biosynthesis; 5-aminolevulinate from L-glutamyl-tRNA(Glu): step 1/2. Its function is as follows. Catalyzes the NADPH-dependent reduction of glutamyl-tRNA(Glu) to glutamate 1-semialdehyde (GSA). This Nocardia farcinica (strain IFM 10152) protein is Glutamyl-tRNA reductase.